The primary structure comprises 500 residues: Na(+)/H(+) antiporter NhaB (500 aa).

11 helical membrane passes run 13–33 (FLGA…IINP), 34–54 (IAVV…EFIF), 62–82 (CYPL…GLTS), 97–117 (ILLL…LLFI), 129–149 (IVIS…LDAL), 242–262 (FLYV…TVVI), 306–326 (GIVA…VGLV), 350–370 (FEEA…VSVI), 392–412 (PIMF…VFVA), 449–469 (VATP…IAPL), and 477–497 (MVWM…LCVT).

This sequence belongs to the NhaB Na(+)/H(+) (TC 2.A.34) antiporter family.

The protein resides in the cell inner membrane. The enzyme catalyses 2 Na(+)(in) + 3 H(+)(out) = 2 Na(+)(out) + 3 H(+)(in). Functionally, na(+)/H(+) antiporter that extrudes sodium in exchange for external protons. The chain is Na(+)/H(+) antiporter NhaB from Marinomonas sp. (strain MWYL1).